We begin with the raw amino-acid sequence, 530 residues long: UDP-glucuronosyltransferase 2B17 (530 aa).

Residues 1-23 (MPGKWISALLLLQISCCFQSGNC) form the signal peptide. A helical membrane pass occupies residues 494–510 (VIGFLLTCSAVIAVLTV).

This sequence belongs to the UDP-glycosyltransferase family.

Its subcellular location is the endoplasmic reticulum membrane. The enzyme catalyses glucuronate acceptor + UDP-alpha-D-glucuronate = acceptor beta-D-glucuronoside + UDP + H(+). It catalyses the reaction 17alpha-estradiol + UDP-alpha-D-glucuronate = 17alpha-estradiol 3-O-(beta-D-glucuronate) + UDP + H(+). The catalysed reaction is 17alpha-estradiol + UDP-alpha-D-glucuronate = 17alpha-estradiol 17-O-(beta-D-glucuronate) + UDP + H(+). It carries out the reaction 17beta-estradiol + UDP-alpha-D-glucuronate = 17beta-estradiol 17-O-(beta-D-glucuronate) + UDP + H(+). The enzyme catalyses 17beta-hydroxy-5alpha-androstan-3-one + UDP-alpha-D-glucuronate = 5alpha-dihydrotestosterone 17-O-(beta-D-glucuronate) + UDP + H(+). It catalyses the reaction testosterone + UDP-alpha-D-glucuronate = testosterone 17-O-(beta-D-glucuronate) + UDP + H(+). UDP-glucuronosyltransferase (UGT) that catalyzes phase II biotransformation reactions in which lipophilic substrates are conjugated with glucuronic acid to increase the metabolite's water solubility, thereby facilitating excretion into either the urine or bile. Catalyzes the glucuronidation of endogenous steroid hormones such as androgens (epitestosterone, androsterone) and estrogens (estradiol, epiestradiol). The polypeptide is UDP-glucuronosyltransferase 2B17 (Rattus norvegicus (Rat)).